We begin with the raw amino-acid sequence, 125 residues long: Small ribosomal subunit protein uS13 (125 aa).

The tract at residues 93-125 (RAGLPVRGQRTRTNARTRRGARKTVAGKKKATR) is disordered. Positions 101–125 (QRTRTNARTRRGARKTVAGKKKATR) are enriched in basic residues.

Belongs to the universal ribosomal protein uS13 family. In terms of assembly, part of the 30S ribosomal subunit. Forms a loose heterodimer with protein S19. Forms two bridges to the 50S subunit in the 70S ribosome.

Functionally, located at the top of the head of the 30S subunit, it contacts several helices of the 16S rRNA. In the 70S ribosome it contacts the 23S rRNA (bridge B1a) and protein L5 of the 50S subunit (bridge B1b), connecting the 2 subunits; these bridges are implicated in subunit movement. Contacts the tRNAs in the A and P-sites. This is Small ribosomal subunit protein uS13 from Synechococcus elongatus (strain ATCC 33912 / PCC 7942 / FACHB-805) (Anacystis nidulans R2).